The primary structure comprises 143 residues: Periplasmic nitrate reductase, electron transfer subunit (143 aa).

Positions 1–22 (MKKILTLAAIVLAIGGCSGQQA) are cleaved as a signal peptide. Residues His72, Cys85, Cys88, His89, His106, Cys121, Cys124, and His125 each coordinate heme c.

This sequence belongs to the NapB family. Component of the periplasmic nitrate reductase NapAB complex composed of NapA and NapB. Binds 2 heme C groups per subunit.

The protein resides in the periplasm. Electron transfer subunit of the periplasmic nitrate reductase complex NapAB. Receives electrons from the membrane-anchored tetraheme c-type CymA protein and transfers these to NapA subunit, thus allowing electron flow between membrane and periplasm. Not essential for nitrate reduction but confers advantage to the organism when grown on nitrate and thereby a fitness gain in utilizing nitrate. This is Periplasmic nitrate reductase, electron transfer subunit from Shewanella oneidensis (strain ATCC 700550 / JCM 31522 / CIP 106686 / LMG 19005 / NCIMB 14063 / MR-1).